Here is a 112-residue protein sequence, read N- to C-terminus: Protein FAM32A (112 aa).

The tract at residues 23 to 56 is disordered; it reads TKRKKKKKDKDKAKMLEAMGTSKKSEEEKRRCLD. Residues 45-56 are compositionally biased toward basic and acidic residues; that stretch reads KKSEEEKRRCLD.

This sequence belongs to the FAM32 family. As to expression, widely expressed, with highest level in pancreas and lowest in muscle.

The protein resides in the nucleus. May induce G2 arrest and apoptosis. May also increase cell sensitivity to apoptotic stimuli. In cell lines, may play a role in the inhibition of anchor-independent cell growth. The chain is Protein FAM32A (Fam32a) from Mus musculus (Mouse).